The following is a 220-amino-acid chain: Deoxyribose-phosphate aldolase 2 (220 aa).

Asp-89 (proton donor/acceptor) is an active-site residue. Lys-151 serves as the catalytic Schiff-base intermediate with acetaldehyde. Residue Lys-180 is the Proton donor/acceptor of the active site.

The protein belongs to the DeoC/FbaB aldolase family. DeoC type 1 subfamily.

The protein resides in the cytoplasm. The catalysed reaction is 2-deoxy-D-ribose 5-phosphate = D-glyceraldehyde 3-phosphate + acetaldehyde. It participates in carbohydrate degradation; 2-deoxy-D-ribose 1-phosphate degradation; D-glyceraldehyde 3-phosphate and acetaldehyde from 2-deoxy-alpha-D-ribose 1-phosphate: step 2/2. In terms of biological role, catalyzes a reversible aldol reaction between acetaldehyde and D-glyceraldehyde 3-phosphate to generate 2-deoxy-D-ribose 5-phosphate. In Staphylococcus aureus (strain COL), this protein is Deoxyribose-phosphate aldolase 2.